Here is a 263-residue protein sequence, read N- to C-terminus: Hydroxyethylthiazole kinase (263 aa).

Residue M45 coordinates substrate. Residues R121 and S167 each coordinate ATP. G194 provides a ligand contact to substrate.

The protein belongs to the Thz kinase family. Mg(2+) is required as a cofactor.

It catalyses the reaction 5-(2-hydroxyethyl)-4-methylthiazole + ATP = 4-methyl-5-(2-phosphooxyethyl)-thiazole + ADP + H(+). It functions in the pathway cofactor biosynthesis; thiamine diphosphate biosynthesis; 4-methyl-5-(2-phosphoethyl)-thiazole from 5-(2-hydroxyethyl)-4-methylthiazole: step 1/1. Its function is as follows. Catalyzes the phosphorylation of the hydroxyl group of 4-methyl-5-beta-hydroxyethylthiazole (THZ). The protein is Hydroxyethylthiazole kinase of Vibrio campbellii (strain ATCC BAA-1116).